Consider the following 647-residue polypeptide: Nucleoside triphosphatase I (647 aa).

The Helicase ATP-binding domain maps to 48 to 212; sequence FIGLKNLNSM…NNLIGLLRPN (165 aa). 61-68 contributes to the ATP binding site; the sequence is WDTGTGKT. A DEXH box motif is present at residues 150–153; that stretch reads DEVH. The 164-residue stretch at 378-541 folds into the Helicase C-terminal domain; it reads YIEACRIILN…KINVVFDLLK (164 aa). Positions 467-533 are binding to the cap-specific mRNA (nucleoside-2'-O-)-methyltransferase; sequence DIIILDMPWN…DIIKNKQGKI (67 aa).

It belongs to the helicase family. NPH I subfamily. Monomer. Interacts (via C-terminus) with RAP94 (via N-terminus). Interacts with the cap-specific mRNA (nucleoside-2'-O-)-methyltransferase.

The protein localises to the virion. The catalysed reaction is a ribonucleoside 5'-triphosphate + H2O = a ribonucleoside 5'-diphosphate + phosphate + H(+). DNA-dependent ATPase required for providing the needed energy to achieve the termination of early transcripts. Acts in concert with the RAP94 subunit of the virion RNA polymerase and the capping enzyme/VTF to catalyze release of UUUUUNU-containing nascent RNA from the elongation complex. NPH-I must bind ssDNA in order to exhibit ATPase activity. This Choristoneura fumiferana (Spruce budworm moth) protein is Nucleoside triphosphatase I (NPH1).